Here is a 249-residue protein sequence, read N- to C-terminus: 2,3-bisphosphoglycerate-dependent phosphoglycerate mutase (249 aa).

Substrate contacts are provided by residues 9–16 (RHGQSQWN), 22–23 (TG), Arg-61, 88–91 (ERHY), Lys-99, 115–116 (RR), and 184–185 (GN). His-10 functions as the Tele-phosphohistidine intermediate in the catalytic mechanism. The active-site Proton donor/acceptor is the Glu-88.

Belongs to the phosphoglycerate mutase family. BPG-dependent PGAM subfamily. In terms of assembly, homodimer.

It carries out the reaction (2R)-2-phosphoglycerate = (2R)-3-phosphoglycerate. The protein operates within carbohydrate degradation; glycolysis; pyruvate from D-glyceraldehyde 3-phosphate: step 3/5. Functionally, catalyzes the interconversion of 2-phosphoglycerate and 3-phosphoglycerate. In Xanthomonas oryzae pv. oryzae (strain MAFF 311018), this protein is 2,3-bisphosphoglycerate-dependent phosphoglycerate mutase.